We begin with the raw amino-acid sequence, 465 residues long: Asparagine--tRNA ligase (465 aa).

Belongs to the class-II aminoacyl-tRNA synthetase family. As to quaternary structure, homodimer.

The protein localises to the cytoplasm. It carries out the reaction tRNA(Asn) + L-asparagine + ATP = L-asparaginyl-tRNA(Asn) + AMP + diphosphate + H(+). This is Asparagine--tRNA ligase from Pseudoalteromonas translucida (strain TAC 125).